The sequence spans 254 residues: Inner membrane protein YabI (254 aa).

The Periplasmic portion of the chain corresponds to M1–H7. 2 consecutive transmembrane segments (helical) span residues F8–S28 and L29–I49. Residues G50–H58 lie on the Periplasmic side of the membrane. Residues A59–W79 traverse the membrane as a helical segment. Topologically, residues R80–N144 are cytoplasmic. The chain crosses the membrane as a helical span at residues I145–A165. Over I166 to K178 the chain is Periplasmic. The chain crosses the membrane as a helical span at residues W179–W199. Residues R200 to G215 are Cytoplasmic-facing. A helical membrane pass occupies residues R216–I236. Residues R237–V254 lie on the Periplasmic side of the membrane.

Belongs to the DedA family.

Its subcellular location is the cell inner membrane. The polypeptide is Inner membrane protein YabI (yabI) (Escherichia coli (strain K12)).